Here is a 96-residue protein sequence, read N- to C-terminus: uncharacterized protein (96 aa).

3 consecutive transmembrane segments (helical) span residues 14-34, 38-58, and 67-87; these read FIEG…KYWA, LAVT…LLVL, and WPLK…GNFL.

It is found in the cell membrane. This is an uncharacterized protein from Bacillus subtilis (strain 168).